The sequence spans 306 residues: Acetaldehyde dehydrogenase (306 aa).

12–15 (SGNI) contributes to the NAD(+) binding site. Catalysis depends on Cys127, which acts as the Acyl-thioester intermediate. Residues 158-166 (SAGPGTRAN) and Asn277 each bind NAD(+).

This sequence belongs to the acetaldehyde dehydrogenase family.

It carries out the reaction acetaldehyde + NAD(+) + CoA = acetyl-CoA + NADH + H(+). The polypeptide is Acetaldehyde dehydrogenase (Mycolicibacterium gilvum (strain PYR-GCK) (Mycobacterium gilvum (strain PYR-GCK))).